We begin with the raw amino-acid sequence, 218 residues long: Ras-related protein RABE1e (218 aa).

22–29 (GDSGVGKS) is a binding site for GTP. The short motif at 44–52 (FITTIGIDF) is the Effector region element. Residues 70 to 74 (DTAGQ), 128 to 131 (NKAD), and 159 to 160 (SA) each bind GTP. The tract at residues 182–218 (TESDTKAEPQGIKITKQDANKASSSSTNEKSACCSYV) is disordered. A compositionally biased stretch (polar residues) spans 201-211 (NKASSSSTNEK). Residues cysteine 214 and cysteine 215 are each lipidated (S-geranylgeranyl cysteine).

The protein belongs to the small GTPase superfamily. Rab family. Interacts with PI5K2.

The protein localises to the golgi apparatus membrane. Its subcellular location is the cell membrane. In terms of biological role, involved in membrane trafficking from the Golgi to the plasma membrane. The sequence is that of Ras-related protein RABE1e (RABE1E) from Arabidopsis thaliana (Mouse-ear cress).